A 420-amino-acid polypeptide reads, in one-letter code: Subtilisin (420 aa).

Residues 1–31 (MKRSGKIFTTAMLAVTLMMPAMGVSANEGNA) form the signal peptide. A propeptide spanning residues 32-111 (AAEGNEKFRV…DKPEALYNAM (80 aa)) is cleaved from the precursor. A Ca(2+)-binding site is contributed by Q115. The Peptidase S8 domain maps to 118-420 (PWGIKAIYNN…ASGFGFATVQ (303 aa)). The Charge relay system role is filled by D145. D154 is a Ca(2+) binding site. Catalysis depends on charge relay system residues H182 and S360.

This sequence belongs to the peptidase S8 family. Requires Ca(2+) as cofactor.

It localises to the secreted. It catalyses the reaction Hydrolysis of proteins with broad specificity for peptide bonds, and a preference for a large uncharged residue in P1. Hydrolyzes peptide amides.. Functionally, subtilisin is an extracellular alkaline serine protease, it catalyzes the hydrolysis of proteins and peptide amides. This chain is Subtilisin (sub1), found in Bacillus sp. (strain TA39).